Reading from the N-terminus, the 334-residue chain is Phosphate acyltransferase (334 aa).

It belongs to the PlsX family. As to quaternary structure, homodimer. Probably interacts with PlsY.

The protein resides in the cytoplasm. It carries out the reaction a fatty acyl-[ACP] + phosphate = an acyl phosphate + holo-[ACP]. It participates in lipid metabolism; phospholipid metabolism. Catalyzes the reversible formation of acyl-phosphate (acyl-PO(4)) from acyl-[acyl-carrier-protein] (acyl-ACP). This enzyme utilizes acyl-ACP as fatty acyl donor, but not acyl-CoA. The chain is Phosphate acyltransferase from Acholeplasma laidlawii (strain PG-8A).